A 306-amino-acid polypeptide reads, in one-letter code: Brix domain-containing protein C4F8.04 (306 aa).

Positions lysine 16 to glutamate 49 are disordered. A compositionally biased stretch (basic and acidic residues) spans lysine 21 to lysine 42. One can recognise a Brix domain in the interval proline 94–aspartate 283.

This is Brix domain-containing protein C4F8.04 from Schizosaccharomyces pombe (strain 972 / ATCC 24843) (Fission yeast).